We begin with the raw amino-acid sequence, 393 residues long: Acetyl-CoA acetyltransferase (393 aa).

The active-site Acyl-thioester intermediate is C88. Catalysis depends on proton acceptor residues H349 and C379.

It belongs to the thiolase-like superfamily. Thiolase family.

The protein resides in the cytoplasm. The catalysed reaction is 2 acetyl-CoA = acetoacetyl-CoA + CoA. Its pathway is metabolic intermediate biosynthesis; (R)-mevalonate biosynthesis; (R)-mevalonate from acetyl-CoA: step 1/3. The polypeptide is Acetyl-CoA acetyltransferase (atoB) (Pseudomonas aeruginosa (strain ATCC 15692 / DSM 22644 / CIP 104116 / JCM 14847 / LMG 12228 / 1C / PRS 101 / PAO1)).